We begin with the raw amino-acid sequence, 45 residues long: Keratin-associated protein 22-2 (45 aa).

Belongs to the KRTAP type 20 family. In terms of assembly, interacts with hair keratins.

Functionally, in the hair cortex, hair keratin intermediate filaments are embedded in an interfilamentous matrix, consisting of hair keratin-associated proteins (KRTAP), which are essential for the formation of a rigid and resistant hair shaft through their extensive disulfide bond cross-linking with abundant cysteine residues of hair keratins. The matrix proteins include the high-sulfur and high-glycine-tyrosine keratins. The chain is Keratin-associated protein 22-2 (KRTAP22-2) from Homo sapiens (Human).